The chain runs to 181 residues: ADP-ribosylation factor 1 (181 aa).

The N-myristoyl glycine moiety is linked to residue Gly-2. GTP contacts are provided by residues Gly-24 to Thr-31, Asp-67 to Gln-71, and Asn-126 to Asp-129.

The protein belongs to the small GTPase superfamily. Arf family.

The protein localises to the golgi apparatus. It carries out the reaction GTP + H2O = GDP + phosphate + H(+). In terms of biological role, GTP-binding protein involved in protein trafficking; may modulate vesicle budding and uncoating within the Golgi apparatus. In Catharanthus roseus (Madagascar periwinkle), this protein is ADP-ribosylation factor 1 (ARF1).